The sequence spans 306 residues: Curved DNA-binding protein (306 aa).

The 65-residue stretch at 5-69 (DYYAIMGVKP…QRRAEYDQMW (65 aa)) folds into the J domain.

It is found in the cytoplasm. The protein resides in the nucleoid. DNA-binding protein that preferentially recognizes a curved DNA sequence. It is probably a functional analog of DnaJ; displays overlapping activities with DnaJ, but functions under different conditions, probably acting as a molecular chaperone in an adaptive response to environmental stresses other than heat shock. Lacks autonomous chaperone activity; binds native substrates and targets them for recognition by DnaK. Its activity is inhibited by the binding of CbpM. The polypeptide is Curved DNA-binding protein (Shigella flexneri).